We begin with the raw amino-acid sequence, 291 residues long: Sulfotransferase 1A1 (291 aa).

44–49 (KSGTNW) is a binding site for 3'-phosphoadenylyl sulfate. 102 to 104 (KTH) is a binding site for substrate. His-104 acts as the Proton acceptor in catalysis. 3'-phosphoadenylyl sulfate contacts are provided by residues Arg-126, Ser-134, Tyr-189, 223–228 (TSFKKM), and 251–255 (FMRKG). Ser-134 is modified (phosphoserine).

This sequence belongs to the sulfotransferase 1 family. As to quaternary structure, homodimer. As to expression, expressed in brain, colon, liver, and small intestine of mice colonized with B.ovatus and L.plantarum.

It localises to the cytoplasm. It carries out the reaction a phenol + 3'-phosphoadenylyl sulfate = an aryl sulfate + adenosine 3',5'-bisphosphate + H(+). The enzyme catalyses 17beta-estradiol + 3'-phosphoadenylyl sulfate = 17beta-estradiol 3-sulfate + adenosine 3',5'-bisphosphate + H(+). The catalysed reaction is 4-ethylphenol + 3'-phosphoadenylyl sulfate = 4-ethylphenyl sulfate + adenosine 3',5'-bisphosphate + H(+). It catalyses the reaction 4-nitrophenol + 3'-phosphoadenylyl sulfate = 4-nitrophenyl sulfate + adenosine 3',5'-bisphosphate. It carries out the reaction dopamine + 3'-phosphoadenylyl sulfate = dopamine 3-O-sulfate + adenosine 3',5'-bisphosphate + H(+). The enzyme catalyses dopamine + 3'-phosphoadenylyl sulfate = dopamine 4-O-sulfate + adenosine 3',5'-bisphosphate + H(+). The catalysed reaction is 3,3',5-triiodo-L-thyronine + 3'-phosphoadenylyl sulfate = 3,3',5-triiodo-L-thyronine sulfate + adenosine 3',5'-bisphosphate + H(+). It catalyses the reaction 3,3',5'-triiodo-L-thyronine + 3'-phosphoadenylyl sulfate = 3,3',5'-triiodo-L-thyronine sulfate + adenosine 3',5'-bisphosphate + H(+). It carries out the reaction 3,3'-diiodo-L-thyronine + 3'-phosphoadenylyl sulfate = 3,3'-diiodo-L-thyronine sulfate + adenosine 3',5'-bisphosphate + H(+). The enzyme catalyses L-thyroxine + 3'-phosphoadenylyl sulfate = L-thyroxine sulfate + adenosine 3',5'-bisphosphate + H(+). Its function is as follows. Sulfotransferase that utilizes 3'-phospho-5'-adenylyl sulfate (PAPS) as sulfonate donor to catalyze the sulfate conjugation of a wide variety of acceptor molecules bearing a hydroxyl or an amine group. Sulfonation increases the water solubility of most compounds, and therefore their renal excretion, but it can also result in bioactivation to form active metabolites. Displays broad substrate specificity for small phenolic compounds. Plays an important role in the sulfonation of endogenous molecules such as steroid hormones. Mediates also the metabolic activation of carcinogenic N-hydroxyarylamines leading to highly reactive intermediates capable of forming DNA adducts, potentially resulting in mutagenesis. May play a role in gut microbiota-host metabolic interaction. O-sulfonates 4-ethylphenol (4-EP), a dietary tyrosine-derived metabolite produced by gut bacteria. The product 4-EPS crosses the blood-brain barrier and may negatively regulate oligodendrocyte maturation and myelination, affecting the functional connectivity of different brain regions associated with the limbic system. Catalyzes the sulfate conjugation of dopamine. Catalyzes the sulfation of T4 (L-thyroxine/3,5,3',5'-tetraiodothyronine), T3 (3,5,3'-triiodothyronine), rT3 (3,3',5'-triiodothyronine) and 3,3'-T2 (3,3'-diiodothyronine), with a substrate preference of 3,3'-T2 &gt; rT3 &gt; T3 &gt; T4. The sequence is that of Sulfotransferase 1A1 (Sult1a1) from Mus musculus (Mouse).